Consider the following 387-residue polypeptide: ATP phosphoribosyltransferase regulatory subunit (387 aa).

The protein belongs to the class-II aminoacyl-tRNA synthetase family. HisZ subfamily. Heteromultimer composed of HisG and HisZ subunits.

The protein localises to the cytoplasm. Its pathway is amino-acid biosynthesis; L-histidine biosynthesis; L-histidine from 5-phospho-alpha-D-ribose 1-diphosphate: step 1/9. Required for the first step of histidine biosynthesis. May allow the feedback regulation of ATP phosphoribosyltransferase activity by histidine. This is ATP phosphoribosyltransferase regulatory subunit from Psychrobacter arcticus (strain DSM 17307 / VKM B-2377 / 273-4).